A 354-amino-acid polypeptide reads, in one-letter code: Tyrosine recombinase XerH (354 aa).

Residues 48–134 form the Core-binding (CB) domain; the sequence is LTKGVKNIDE…AVINFFDFLD (87 aa). Positions 163–346 constitute a Tyr recombinase domain; it reads KLPEFMSKEE…DNDKLKLAAQ (184 aa). Residues arginine 205, lysine 231, histidine 298, arginine 301, and histidine 324 contribute to the active site. The active-site O-(3'-phospho-DNA)-tyrosine intermediate is tyrosine 333.

Belongs to the 'phage' integrase family. XerH subfamily.

It localises to the cytoplasm. FtsK is required for efficient recombination. Functionally, site-specific tyrosine recombinase, which acts by catalyzing the cutting and rejoining of the recombining DNA molecules. Binds to the complete atypical dif motif (difH) site and to both halves separately. In Campylobacter jejuni subsp. jejuni serotype O:2 (strain ATCC 700819 / NCTC 11168), this protein is Tyrosine recombinase XerH.